The sequence spans 1157 residues: DNA-directed RNA polymerase subunit beta (1157 aa).

The protein belongs to the RNA polymerase beta chain family. As to quaternary structure, the RNAP catalytic core consists of 2 alpha, 1 beta, 1 beta' and 1 omega subunit. When a sigma factor is associated with the core the holoenzyme is formed, which can initiate transcription.

It carries out the reaction RNA(n) + a ribonucleoside 5'-triphosphate = RNA(n+1) + diphosphate. Its function is as follows. DNA-dependent RNA polymerase catalyzes the transcription of DNA into RNA using the four ribonucleoside triphosphates as substrates. In Tropheryma whipplei (strain Twist) (Whipple's bacillus), this protein is DNA-directed RNA polymerase subunit beta.